The sequence spans 236 residues: 1-(5-phosphoribosyl)-5-[(5-phosphoribosylamino)methylideneamino] imidazole-4-carboxamide isomerase (236 aa).

The active-site Proton acceptor is Asp8. Asp127 (proton donor) is an active-site residue.

The protein belongs to the HisA/HisF family.

Its subcellular location is the cytoplasm. The enzyme catalyses 1-(5-phospho-beta-D-ribosyl)-5-[(5-phospho-beta-D-ribosylamino)methylideneamino]imidazole-4-carboxamide = 5-[(5-phospho-1-deoxy-D-ribulos-1-ylimino)methylamino]-1-(5-phospho-beta-D-ribosyl)imidazole-4-carboxamide. Its pathway is amino-acid biosynthesis; L-histidine biosynthesis; L-histidine from 5-phospho-alpha-D-ribose 1-diphosphate: step 4/9. The sequence is that of 1-(5-phosphoribosyl)-5-[(5-phosphoribosylamino)methylideneamino] imidazole-4-carboxamide isomerase from Campylobacter fetus subsp. fetus (strain 82-40).